The sequence spans 360 residues: Protein phosphatase 1 regulatory subunit 7 (360 aa).

The interval 1–63 is disordered; the sequence is MAAERGAGQQ…RGAEDPEEEH (63 aa). Ala-2 carries the post-translational modification N-acetylalanine. Residues Ser-12, Ser-24, Ser-27, Ser-44, and Ser-47 each carry the phosphoserine modification. Residues 17–34 show a composition bias toward basic and acidic residues; sequence EVDRRVESEESGDEEGKK. LRR repeat units follow at residues 77-98, 99-120, 121-142, 143-164, 165-186, 187-208, 209-230, 231-252, 253-274, 275-296, and 297-318; these read DAED…EVLK, KVKS…DELQ, SLRE…EALT, ELEV…DKLT, QLKK…STLQ, QLQM…DTLT, NLES…DALS, NLTV…QNLV, NLRE…ENNN, KLTM…SHLT, and ELQE…DELK. Position 322 is a phosphoserine (Ser-322). The LRRCT domain maps to 331-360; sequence NPLQKDPQYRRKVMLALPSVRQIDATFVRF.

Belongs to the SDS22 family. In terms of assembly, interacts with PPP1CA, PPP1CB and PPP1CC/PPP1G.

It localises to the nucleus. Functionally, regulatory subunit of protein phosphatase 1. The sequence is that of Protein phosphatase 1 regulatory subunit 7 (Ppp1r7) from Rattus norvegicus (Rat).